We begin with the raw amino-acid sequence, 323 residues long: Aspartate carbamoyltransferase catalytic subunit (323 aa).

Carbamoyl phosphate is bound by residues R71 and T72. K99 serves as a coordination point for L-aspartate. Residues R121, H151, and Q154 each contribute to the carbamoyl phosphate site. 2 residues coordinate L-aspartate: R184 and R239. Residues G280 and P281 each coordinate carbamoyl phosphate.

It belongs to the aspartate/ornithine carbamoyltransferase superfamily. ATCase family. In terms of assembly, heterododecamer (2C3:3R2) of six catalytic PyrB chains organized as two trimers (C3), and six regulatory PyrI chains organized as three dimers (R2).

It catalyses the reaction carbamoyl phosphate + L-aspartate = N-carbamoyl-L-aspartate + phosphate + H(+). It participates in pyrimidine metabolism; UMP biosynthesis via de novo pathway; (S)-dihydroorotate from bicarbonate: step 2/3. Catalyzes the condensation of carbamoyl phosphate and aspartate to form carbamoyl aspartate and inorganic phosphate, the committed step in the de novo pyrimidine nucleotide biosynthesis pathway. This chain is Aspartate carbamoyltransferase catalytic subunit, found in Ralstonia pickettii (strain 12J).